We begin with the raw amino-acid sequence, 209 residues long: Large ribosomal subunit protein uL3 (209 aa).

Gln150 carries the N5-methylglutamine modification.

The protein belongs to the universal ribosomal protein uL3 family. As to quaternary structure, part of the 50S ribosomal subunit. Forms a cluster with proteins L14 and L19. In terms of processing, methylated by PrmB.

Functionally, one of the primary rRNA binding proteins, it binds directly near the 3'-end of the 23S rRNA, where it nucleates assembly of the 50S subunit. The polypeptide is Large ribosomal subunit protein uL3 (Aliivibrio salmonicida (strain LFI1238) (Vibrio salmonicida (strain LFI1238))).